A 143-amino-acid chain; its full sequence is Large ribosomal subunit protein uL11 (143 aa).

It belongs to the universal ribosomal protein uL11 family. Part of the ribosomal stalk of the 50S ribosomal subunit. Interacts with L10 and the large rRNA to form the base of the stalk. L10 forms an elongated spine to which L12 dimers bind in a sequential fashion forming a multimeric L10(L12)X complex. In terms of processing, one or more lysine residues are methylated.

Forms part of the ribosomal stalk which helps the ribosome interact with GTP-bound translation factors. This chain is Large ribosomal subunit protein uL11, found in Burkholderia multivorans (strain ATCC 17616 / 249).